A 245-amino-acid chain; its full sequence is Polynucleotide 3'-phosphatase (245 aa).

Belongs to the DNA 3' phosphatase family.

It localises to the nucleus. It carries out the reaction a 3'end (2'-deoxyribonucleotide 3'-phosphate)-DNA + H2O = a 3'-end 2'-deoxyribonucleotide-DNA + phosphate. Dephosphorylate DNA's 3'-phosphate termini. Has a role in the repair of breaks in single-stranded DNA. The sequence is that of Polynucleotide 3'-phosphatase (TPP1) from Saccharomyces mikatae (Yeast).